We begin with the raw amino-acid sequence, 333 residues long: Arginase (333 aa).

Residue methionine 1 is modified to N-acetylmethionine. Residue serine 16 is modified to Phosphoserine. The residue at position 77 (threonine 77) is a Phosphothreonine. Residues histidine 123, aspartate 146, histidine 148, and aspartate 150 each contribute to the Mn(2+) site. Substrate is bound by residues 148–152 (HADIN), 159–161 (SGN), and aspartate 205. Residues aspartate 256 and aspartate 258 each coordinate Mn(2+). Threonine 270 carries the phosphothreonine modification. Substrate is bound by residues threonine 270 and glutamate 301.

Belongs to the arginase family. Homotrimer. Mn(2+) is required as a cofactor.

It catalyses the reaction L-arginine + H2O = urea + L-ornithine. It functions in the pathway nitrogen metabolism; urea cycle; L-ornithine and urea from L-arginine: step 1/1. This is Arginase (CAR1) from Saccharomyces cerevisiae (strain ATCC 204508 / S288c) (Baker's yeast).